Reading from the N-terminus, the 272-residue chain is Glutamate racemase (272 aa).

Substrate-binding positions include 10–11 (DS) and 42–43 (YG). Cys74 acts as the Proton donor/acceptor in catalysis. 75–76 (NT) contributes to the substrate binding site. Residue Cys185 is the Proton donor/acceptor of the active site. 186 to 187 (TH) is a substrate binding site.

It belongs to the aspartate/glutamate racemases family.

The catalysed reaction is L-glutamate = D-glutamate. It functions in the pathway cell wall biogenesis; peptidoglycan biosynthesis. Its function is as follows. Provides the (R)-glutamate required for cell wall biosynthesis. In Bacillus pumilus (strain SAFR-032), this protein is Glutamate racemase.